The following is a 197-amino-acid chain: ADP-ribosylation factor-like protein 16 (197 aa).

GTP-binding positions include 30–37, 82–86, and 139–142; these read GATGVGKT, ELGGC, and NKID.

It belongs to the small GTPase superfamily. Arf family. As to quaternary structure, interacts with RIGI; this interaction is GTP-dependent and induced upon viral infection; this interaction suppresses the RNA sensing activity of RIGI.

Its subcellular location is the cytoplasm. May suppress the RNA sensing activity of RIGI in a GTP-dependent. The polypeptide is ADP-ribosylation factor-like protein 16 (Homo sapiens (Human)).